We begin with the raw amino-acid sequence, 451 residues long: Exodeoxyribonuclease 7 large subunit (451 aa).

This sequence belongs to the XseA family. As to quaternary structure, heterooligomer composed of large and small subunits.

The protein resides in the cytoplasm. It catalyses the reaction Exonucleolytic cleavage in either 5'- to 3'- or 3'- to 5'-direction to yield nucleoside 5'-phosphates.. In terms of biological role, bidirectionally degrades single-stranded DNA into large acid-insoluble oligonucleotides, which are then degraded further into small acid-soluble oligonucleotides. This Neisseria meningitidis serogroup C / serotype 2a (strain ATCC 700532 / DSM 15464 / FAM18) protein is Exodeoxyribonuclease 7 large subunit.